We begin with the raw amino-acid sequence, 173 residues long: Large ribosomal subunit protein bL9 (173 aa).

The protein belongs to the bacterial ribosomal protein bL9 family.

In terms of biological role, binds to the 23S rRNA. This chain is Large ribosomal subunit protein bL9, found in Rickettsia bellii (strain OSU 85-389).